The primary structure comprises 211 residues: Metalloproteinase inhibitor 3 (211 aa).

The N-terminal stretch at 1 to 23 (MTPWLGLIVLLGSWSLGDWGAEA) is a signal peptide. Cys24 lines the Zn(2+) pocket. Involved in metalloproteinase-binding regions lie at residues 24–27 (CTCS) and 88–89 (ES). 6 disulfide bridges follow: Cys24–Cys91, Cys26–Cys118, Cys36–Cys143, Cys145–Cys192, Cys150–Cys155, and Cys163–Cys184. One can recognise an NTR domain in the interval 24–143 (CTCSPSHPQD…GLNYRYHLGC (120 aa)). Positions 105 to 188 (TGRVYDGKMY…SKHYACIRQK (84 aa)) are mediates interaction with EFEMP1. Residue Asn207 is glycosylated (N-linked (GlcNAc...) asparagine).

Belongs to the protease inhibitor I35 (TIMP) family. In terms of assembly, interacts with EFEMP1. Interacts with KDR.

Its subcellular location is the secreted. It is found in the extracellular space. It localises to the extracellular matrix. In terms of biological role, mediates a variety of processes including matrix regulation and turnover, inflammation, and angiogenesis, through reversible inhibition of zinc protease superfamily enzymes, primarily matrix metalloproteinases (MMPs). Regulates extracellular matrix (ECM) remodeling through inhibition of matrix metalloproteinases (MMP) including MMP-1, MMP-2, MMP-3, MMP-7, MMP-9, MMP-13, MMP-14 and MMP-15. Additionally, modulates the processing of amyloid precursor protein (APP) and apolipoprotein E receptor ApoER2 by inhibiting two alpha-secretases ADAM10 and ADAM17. Functions as a tumor suppressor and a potent inhibitor of angiogenesis. Exerts its anti-angiogenic effect by directly interacting with vascular endothelial growth factor (VEGF) receptor-2/KDR, preventing its binding to the VEGFA ligand. Selectively induces apoptosis in angiogenic endothelial cells through a caspase-independent cell death pathway. Mechanistically, inhibits matrix-induced focal adhesion kinase PTK2 tyrosine phosphorylation and association with paxillin/PXN and disrupts the incorporation of ITGB3, PTK2 and PXN into focal adhesion contacts on the matrix. The polypeptide is Metalloproteinase inhibitor 3 (TIMP3) (Macaca mulatta (Rhesus macaque)).